Consider the following 438-residue polypeptide: UDP-N-acetylmuramoylalanine--D-glutamate ligase (438 aa).

112-118 is an ATP binding site; the sequence is GSNGKST.

Belongs to the MurCDEF family.

Its subcellular location is the cytoplasm. It catalyses the reaction UDP-N-acetyl-alpha-D-muramoyl-L-alanine + D-glutamate + ATP = UDP-N-acetyl-alpha-D-muramoyl-L-alanyl-D-glutamate + ADP + phosphate + H(+). The protein operates within cell wall biogenesis; peptidoglycan biosynthesis. Cell wall formation. Catalyzes the addition of glutamate to the nucleotide precursor UDP-N-acetylmuramoyl-L-alanine (UMA). This chain is UDP-N-acetylmuramoylalanine--D-glutamate ligase, found in Salmonella choleraesuis (strain SC-B67).